Here is a 273-residue protein sequence, read N- to C-terminus: Small ribosomal subunit protein uS2 (273 aa).

The segment at 244–273 (SDEEANSSAEENENRQEDLLAKKYDSSEAN) is disordered. Over residues 255–273 (NENRQEDLLAKKYDSSEAN) the composition is skewed to basic and acidic residues.

This sequence belongs to the universal ribosomal protein uS2 family.

In Chlamydia felis (strain Fe/C-56) (Chlamydophila felis), this protein is Small ribosomal subunit protein uS2.